The primary structure comprises 351 residues: sn-glycerol-3-phosphate import ATP-binding protein UgpC (351 aa).

The 232-residue stretch at 4 to 235 (IVLDNVRKSY…PASTFVATFI (232 aa)) folds into the ABC transporter domain. 37-44 (GPSGCGKS) provides a ligand contact to ATP.

It belongs to the ABC transporter superfamily. sn-glycerol-3-phosphate importer (TC 3.A.1.1.3) family. The complex is composed of two ATP-binding proteins (UgpC), two transmembrane proteins (UgpA and UgpE) and a solute-binding protein (UgpB).

It is found in the cell inner membrane. The catalysed reaction is sn-glycerol 3-phosphate(out) + ATP + H2O = sn-glycerol 3-phosphate(in) + ADP + phosphate + H(+). Part of the ABC transporter complex UgpBAEC involved in sn-glycerol-3-phosphate (G3P) import. Responsible for energy coupling to the transport system. This chain is sn-glycerol-3-phosphate import ATP-binding protein UgpC, found in Brucella abortus biovar 1 (strain 9-941).